A 135-amino-acid chain; its full sequence is Histone H2B.4 (135 aa).

Basic and acidic residues-rich tracts occupy residues 1 to 12 (MAPKAAEKKPVE) and 23 to 35 (EKKVPTSKEGGEK). A disordered region spans residues 1 to 43 (MAPKAAEKKPVEKTPAVKKPKAEKKVPTSKEGGEKKGKKKSKK). N6-acetyllysine is present on residues K8 and K24. A Glycyl lysine isopeptide (Lys-Gly) (interchain with G-Cter in ubiquitin) cross-link involves residue K131.

Belongs to the histone H2B family. In terms of assembly, the nucleosome is a histone octamer containing two molecules each of H2A, H2B, H3 and H4 assembled in one H3-H4 heterotetramer and two H2A-H2B heterodimers. The octamer wraps approximately 147 bp of DNA. In terms of processing, can be acetylated to form H2BK6ac and H2BK33ac. Monoubiquitinated to form H2BK143ub1; may give a specific tag for epigenetic transcriptional activation. As to expression, expressed preferentially in meristematic tissues.

Its subcellular location is the nucleus. The protein localises to the chromosome. In terms of biological role, core component of nucleosome. Nucleosomes wrap and compact DNA into chromatin, limiting DNA accessibility to the cellular machineries which require DNA as a template. Histones thereby play a central role in transcription regulation, DNA repair, DNA replication and chromosomal stability. DNA accessibility is regulated via a complex set of post-translational modifications of histones, also called histone code, and nucleosome remodeling. The protein is Histone H2B.4 (TH153) of Triticum aestivum (Wheat).